The sequence spans 503 residues: Glycerol kinase (503 aa).

T17 serves as a coordination point for ADP. ATP contacts are provided by T17, T18, and S19. T17 provides a ligand contact to sn-glycerol 3-phosphate. Residue R21 participates in ADP binding. 4 residues coordinate sn-glycerol 3-phosphate: R87, E88, Y141, and D245. Residues R87, E88, Y141, D245, and Q246 each contribute to the glycerol site. ADP is bound by residues T267 and G310. 4 residues coordinate ATP: T267, G310, Q314, and G411. ADP contacts are provided by G411 and N415.

It belongs to the FGGY kinase family.

The enzyme catalyses glycerol + ATP = sn-glycerol 3-phosphate + ADP + H(+). It participates in polyol metabolism; glycerol degradation via glycerol kinase pathway; sn-glycerol 3-phosphate from glycerol: step 1/1. Its activity is regulated as follows. Inhibited by fructose 1,6-bisphosphate (FBP). In terms of biological role, key enzyme in the regulation of glycerol uptake and metabolism. Catalyzes the phosphorylation of glycerol to yield sn-glycerol 3-phosphate. The chain is Glycerol kinase from Pseudomonas tolaasii.